Consider the following 166-residue polypeptide: FMN reductase (NADH) RutF (166 aa).

It belongs to the non-flavoprotein flavin reductase family. RutF subfamily.

The catalysed reaction is FMNH2 + NAD(+) = FMN + NADH + 2 H(+). Functionally, catalyzes the reduction of FMN to FMNH2 which is used to reduce pyrimidine by RutA via the Rut pathway. The polypeptide is FMN reductase (NADH) RutF (Cronobacter turicensis (strain DSM 18703 / CCUG 55852 / LMG 23827 / z3032)).